We begin with the raw amino-acid sequence, 602 residues long: Glutathione-regulated potassium-efflux system protein KefB (602 aa).

13 helical membrane-spanning segments follow: residues 4–24, 29–49, 55–75, 87–107, 115–135, 152–172, 181–201, 207–227, 230–250, 261–281, 296–318, 326–346, and 356–376; these read TGLL…VPIA, IGAV…GLGF, EILH…GLEL, IFGV…ALLY, AAVI…LQLM, VLLF…ILAG, VKIG…RYLL, YIVA…VVLG, LFMD…GILL, IAIE…VGMA, LGVL…VFGL, FAGV…AAFS, and ALLL…MQVI. The 120-residue stretch at 400-519 folds into the RCK N-terminal domain; sequence DPQVIIVGFG…NGVKDFTRET (120 aa).

It belongs to the monovalent cation:proton antiporter 2 (CPA2) transporter (TC 2.A.37) family. KefB subfamily. In terms of assembly, interacts with the regulatory subunit KefG.

Its subcellular location is the cell inner membrane. Pore-forming subunit of a potassium efflux system that confers protection against electrophiles. Catalyzes K(+)/H(+) antiport. In Yersinia pestis bv. Antiqua (strain Antiqua), this protein is Glutathione-regulated potassium-efflux system protein KefB.